We begin with the raw amino-acid sequence, 58 residues long: Large ribosomal subunit protein bL32 (58 aa).

This sequence belongs to the bacterial ribosomal protein bL32 family.

This chain is Large ribosomal subunit protein bL32, found in Caldicellulosiruptor bescii (strain ATCC BAA-1888 / DSM 6725 / KCTC 15123 / Z-1320) (Anaerocellum thermophilum).